A 65-amino-acid polypeptide reads, in one-letter code: Large ribosomal subunit protein bL35 (65 aa).

The protein belongs to the bacterial ribosomal protein bL35 family.

The sequence is that of Large ribosomal subunit protein bL35 from Aromatoleum aromaticum (strain DSM 19018 / LMG 30748 / EbN1) (Azoarcus sp. (strain EbN1)).